A 133-amino-acid polypeptide reads, in one-letter code: UPF0102 protein Fnod_1509 (133 aa).

It belongs to the UPF0102 family.

The polypeptide is UPF0102 protein Fnod_1509 (Fervidobacterium nodosum (strain ATCC 35602 / DSM 5306 / Rt17-B1)).